A 116-amino-acid chain; its full sequence is Flagellar hook-basal body complex protein FliE (116 aa).

This sequence belongs to the FliE family.

The protein localises to the bacterial flagellum basal body. The protein is Flagellar hook-basal body complex protein FliE of Rhizobium rhizogenes (strain K84 / ATCC BAA-868) (Agrobacterium radiobacter).